Reading from the N-terminus, the 132-residue chain is Small ribosomal subunit protein uS12 (132 aa).

Asp-89 carries the 3-methylthioaspartic acid modification. Positions 103-132 (DTSGVADRRQSRSKYGAKQPKEGGAAKGKK) are disordered.

Belongs to the universal ribosomal protein uS12 family. As to quaternary structure, part of the 30S ribosomal subunit. Contacts proteins S8 and S17. May interact with IF1 in the 30S initiation complex.

Functionally, with S4 and S5 plays an important role in translational accuracy. Interacts with and stabilizes bases of the 16S rRNA that are involved in tRNA selection in the A site and with the mRNA backbone. Located at the interface of the 30S and 50S subunits, it traverses the body of the 30S subunit contacting proteins on the other side and probably holding the rRNA structure together. The combined cluster of proteins S8, S12 and S17 appears to hold together the shoulder and platform of the 30S subunit. The protein is Small ribosomal subunit protein uS12 of Chlorobium phaeovibrioides (strain DSM 265 / 1930) (Prosthecochloris vibrioformis (strain DSM 265)).